A 271-amino-acid chain; its full sequence is Auxin-responsive protein IAA5 (271 aa).

A disordered region spans residues 1-96 (MSPPLEPHDY…RHGASSGSVA (96 aa)). Low complexity-rich tracts occupy residues 14–33 (SAAA…SPNP) and 40–50 (PRLTLRLGLPG). Residues 44-48 (LRLGL) carry the EAR-like (transcriptional repression) motif. Positions 151–255 (PLYVKVSMDG…RKLKIMRGSD (105 aa)) constitute a PB1 domain.

Belongs to the Aux/IAA family. As to quaternary structure, homodimers and heterodimers.

It localises to the nucleus. Its function is as follows. Aux/IAA proteins are short-lived transcriptional factors that function as repressors of early auxin response genes at low auxin concentrations. The chain is Auxin-responsive protein IAA5 (IAA5) from Oryza sativa subsp. japonica (Rice).